A 1434-amino-acid polypeptide reads, in one-letter code: MDQEVMDFFDFSKELNRVPGAPQGYISSDPWLMATESKSSEVPNRETIGTDYVTKIVAKEKCRLNRTLLEYQPQGKRNRTLDDLDTDDEAEETEIRRDDEYYKKFRFNLNRDKNLSIYAKREEILAAINAHPVIIIKGETGCGKTTQVPQYILDEAYKSGKYCNIVVTQPRRIAAISIANRVCQEREWQQNTVCSFQVGLHRPNSLEDTRLLYCTTGVLLNNLINNKTLTHYTHIVLDEVHERDQNMDFLLIVVRRLLATNSRHVKIILMSATIDAKELSDYFATTNSIPPVITTNHGRKHSIEKFYRDQLGSIIWNEEDVGDQHVPEINKHGYRAAVKIIVIIDNMERKAAIQSRLSYDETLRYGAVLIFLPGIYEIDTMAENITCMLENDRNIKVLIVRCFSLMTPENQRDVFNPPPPGFRKIILATNIAESSITVPDVSYVIDFCLTKVKVTDTASSFSSLRLTWASKANCRQRAGRVGRLRSGRVYRMVNKHFYQREMAEFGIPEMLRLPLQNSVLKAKVLNMGSPMEILALALSPPNLSDIQNTILLLKEVGALYLTVDGVYDALDGDLTYWGTIMARLPLDTRQSRLIILGYIFNMLEEAIIIAAGLSTNGLFAHDGGRTQLGDSFWMHYIFADGSGSDLVAIWRVYLTYLSLVEIGHDQESAIRWAKRFHVSLRSLKEIHLLVQELRVRCMHLGLIPFSVNPSQMMDDREKAIMLKVIIAGAFYPNYFTRSKDTCADTDRNIYQTISGHDPCRTVYFTNFKPAYMGELYTRRIKELFQEVRIPPENMDVTFQEGSQKVFVTFKQDDWIADSSKFVPVSGRVQSEVYKAVMMRQNRLERPIHIMNPSAFMSYVQQRGIGDVIEGRWIPPTKPLNVELLALPSVFDKTISGLITCIVSCGKFFFQPQSFAECIGNMSEIFNAPQQLRNYVNNAGDITKGMMVLAKRDSYFQRATVIRPENQSNRQPMFYVRFIDYGDCALLSMQQMRLMPRELTEQYGDLPPRVFECRLAMVQPSSMVSGNNRWSTAANDMLRSVAKSGLIDIEVYSLFNNVAAVLIYMRDGIINDKLVELMLCRRSDEDYMSRKDHDFRLRRQESARYLSSAQRQQINEEYMRSCQLPEDHDLRPPPPEKCKTVVILKGPYSPLECTMQCITRVGSSKRVNIDHLSVNALLLDADPQDHHDHLIVAHEIAENRNGHTLTARGTTLMPNVQGFGALMVMLFSPTMQLKCNREGTSYVSVLGGLGCDPETNEPYFPEHDVLINLDVNILEDDVILINQIRYYIDSVFFNFKDENNPAVSANERVSIYTQLRSIINRLLCKDRRYIERNMSNADFEWETHPDLPPPNEPFGKRAIFPMHSLTELQEEDTGRLVQLRENCSMLHKWRNVEGTLPHMTCKLCNQLLDSVPQLRLHLLTILHRDREKQIDYCNQ.

The Helicase ATP-binding domain occupies 125 to 292 (LAAINAHPVI…FATTNSIPPV (168 aa)). Position 138-145 (138-145 (GETGCGKT)) interacts with ATP. The DEAH box motif lies at 238-241 (DEVH). Residues 339–526 (KIIVIIDNME…NSVLKAKVLN (188 aa)) form the Helicase C-terminal domain. A Tudor domain is found at 938-1001 (AGDITKGMMV…RLMPRELTEQ (64 aa)).

This sequence belongs to the DEAD box helicase family. DEAH subfamily.

The protein resides in the cytoplasm. The enzyme catalyses ATP + H2O = ADP + phosphate + H(+). Functionally, probable ATP-binding RNA helicase which plays a central role during spermatogenesis and oogenesis by repressing transposable elements and preventing their mobilization, which is essential for the germline integrity. Acts via the piRNA metabolic process, which mediates the repression of transposable elements during meiosis by forming complexes composed of piRNAs and Piwi and govern the methylation and subsequent repression of transposons. Involved in the repression of LTR retrotransposon copia. Also involved in telomere regulation by repressing specialized telomeric retroelements HeT-A, TAHRE, and TART; Drosophila telomeres being maintained by transposition of specialized telomeric retroelements. Involved in telomeric trans-silencing, a repression mechanism by which a transposon or a transgene inserted in subtelomeric heterochromatin has the capacity to repress in trans in the female germline, a homologous transposon, or transgene located in euchromatin. Involved in the repression of testis-expressed Stellate genes by the homologous Su(Ste) repeats. Required for anteroposterior and dorsoventral axis formation during oogenesis. The sequence is that of Probable ATP-dependent RNA helicase spindle-E (spn-E) from Drosophila sechellia (Fruit fly).